Consider the following 110-residue polypeptide: Insulin (110 aa).

Positions 1 to 24 (MALWMRLLPLLALLALWGPDPAAA) are cleaved as a signal peptide. Intrachain disulfides connect Cys-31-Cys-96, Cys-43-Cys-109, and Cys-95-Cys-100. A propeptide spans 57 to 87 (EAEDLQVGQVELGGGPGAGSLQPLALEGSLQ) (c peptide).

This sequence belongs to the insulin family. As to quaternary structure, heterodimer of a B chain and an A chain linked by two disulfide bonds.

The protein localises to the secreted. Functionally, insulin decreases blood glucose concentration. It increases cell permeability to monosaccharides, amino acids and fatty acids. It accelerates glycolysis, the pentose phosphate cycle, and glycogen synthesis in liver. The chain is Insulin (INS) from Gorilla gorilla gorilla (Western lowland gorilla).